The following is a 505-amino-acid chain: Salutaridine synthase (505 aa).

The helical transmembrane segment at 10–30 (DFWMIACTVIIVFALVKFMFS) threads the bilayer. C444 is a binding site for heme.

Belongs to the cytochrome P450 family. Heme is required as a cofactor.

It localises to the endoplasmic reticulum membrane. It catalyses the reaction (R)-reticuline + reduced [NADPH--hemoprotein reductase] + O2 = salutaridine + oxidized [NADPH--hemoprotein reductase] + 2 H2O + H(+). Functionally, cytochrome P450 monooxygenase involved in biosynthesis of morphinan-type benzylisoquinoline and opiate alkaloids natural products. Catalyzes the formation of the morphinan alkaloid salutaridine by intramolecular phenol oxidation of (R)-reticuline without the incorporation of oxygen into the product. Can also use (R)-norreticuline as substrate. The sequence is that of Salutaridine synthase from Papaver somniferum (Opium poppy).